The following is a 356-amino-acid chain: Alpha-N-acetylneuraminide alpha-2,8-sialyltransferase (356 aa).

Residues 1–29 (MSPCGRARRQTSRGAMAVLAWKFPRTRLP) lie on the Cytoplasmic side of the membrane. Residues 30–48 (MGASALCVVVLCWLYIFPV) traverse the membrane as a helical; Signal-anchor for type II membrane protein segment. The Lumenal segment spans residues 49 to 356 (YRLPNEKEIV…CEDTSLQPTS (308 aa)). Asn-71 and Asn-119 each carry an N-linked (GlcNAc...) asparagine glycan. Cystine bridges form between Cys-138/Cys-287 and Cys-152/Cys-347. Residues Asn-143 and Asn-166 each coordinate CMP-N-acetyl-beta-neuraminate. Residues Asn-214 and Asn-245 are each glycosylated (N-linked (GlcNAc...) asparagine). Residues Ser-274, Thr-275, Gly-276, Trp-296, and His-310 each contribute to the CMP-N-acetyl-beta-neuraminate site. The active-site Proton donor/acceptor is the His-322.

It belongs to the glycosyltransferase 29 family.

It is found in the golgi apparatus membrane. It carries out the reaction an N-acetyl-alpha-neuraminyl-(2-&gt;3)-beta-D-galactosyl derivative + CMP-N-acetyl-beta-neuraminate = an N-acetyl-alpha-neuraminyl-(2-&gt;8)-N-acetyl-alpha-neuraminyl-(2-&gt;3)-beta-D-galactosyl derivative + CMP + H(+). The catalysed reaction is a ganglioside GM3 (d18:1(4E)) + CMP-N-acetyl-beta-neuraminate = a ganglioside GD3 (d18:1(4E)) + CMP + H(+). It catalyses the reaction a ganglioside GD3 (d18:1(4E)) + CMP-N-acetyl-beta-neuraminate = a ganglioside GT3 (d18:1(4E)) + CMP + H(+). The enzyme catalyses a ganglioside GD1a (d18:1(4E)) + CMP-N-acetyl-beta-neuraminate = a ganglioside GT1a (d18:1(4E)) + CMP + H(+). It carries out the reaction a ganglioside GT1b (d18:1(4E)) + CMP-N-acetyl-beta-neuraminate = a ganglioside GQ1b (d18:1(4E)) + CMP + H(+). The catalysed reaction is a ganglioside GM1b (d18:1(4E)) + CMP-N-acetyl-beta-neuraminate = a ganglioside GD1c (d18:1(4E)) + CMP + H(+). It catalyses the reaction a ganglioside GD3 + CMP-N-acetyl-beta-neuraminate = a ganglioside GT3 + CMP + H(+). The enzyme catalyses [alpha-N-acetylneuraminyl-(2-&gt;8)](n)-alpha-N-acetylneuraminyl-(2-&gt;8)-alpha-N-acetylneuraminyl-(2-&gt;3)-beta-D-galactosyl-(1-&gt;4)-beta-D-glucosyl-(1&lt;-&gt;1)-ceramide + CMP-N-acetyl-beta-neuraminate = [alpha-N-acetylneuraminyl-(2-&gt;8)](n+1)-alpha-N-acetylneuraminyl-(2-&gt;8)-alpha-N-acetylneuraminyl-(2-&gt;3)-beta-D-galactosyl-(1-&gt;4)-beta-D-glucosyl-(1&lt;-&gt;1)-ceramide + CMP + H(+). The protein operates within protein modification; protein glycosylation. Its pathway is lipid metabolism; sphingolipid metabolism. Catalyzes the addition of sialic acid in alpha 2,8-linkage to the sialic acid moiety of the ganglioside GM3 to form ganglioside GD3; gangliosides are a subfamily of complex glycosphingolipds that contain one or more residues of sialic acid. Can catalyze the addition of a second alpha-2,8- sialic acid to GD3 to form GT3. Can use GM1b, GD1a and GT1b as acceptor substrates to synthesize GD1c, GT1a and GQ1b respectively. This Pan troglodytes (Chimpanzee) protein is Alpha-N-acetylneuraminide alpha-2,8-sialyltransferase.